Consider the following 183-residue polypeptide: Beta-defensin 129 (183 aa).

The first 19 residues, 1 to 19, serve as a signal peptide directing secretion; sequence MKLLFPIFASLMLQYQVNT. Intrachain disulfides connect C27–C53, C34–C48, and C38–C54. A disordered region spans residues 142-183; that stretch reads ATSAKSNTKESGDSATASPPPAPPPPNILPTPSLELEEAEEQ. Pro residues predominate over residues 159–170; that stretch reads SPPPAPPPPNIL.

It belongs to the beta-defensin family.

It is found in the secreted. Functionally, has antibacterial activity. This Macaca fascicularis (Crab-eating macaque) protein is Beta-defensin 129 (DEFB129).